Here is a 982-residue protein sequence, read N- to C-terminus: Polyribonucleotide nucleotidyltransferase 2, mitochondrial (982 aa).

The N-terminal 39 residues, methionine 1–alanine 39, are a transit peptide targeting the mitochondrion. Positions proline 624–valine 678 constitute a KH domain. Positions glycine 689–lysine 757 constitute an S1 motif 1 domain. 2 disordered regions span residues proline 792–proline 814 and glutamine 832–leucine 892. 2 stretches are compositionally biased toward low complexity: residues alanine 846–proline 855 and lysine 868–alanine 877. The S1 motif 2 domain maps to glycine 920–aspartate 982.

The protein belongs to the polyribonucleotide nucleotidyltransferase family.

Its subcellular location is the mitochondrion. It catalyses the reaction RNA(n+1) + phosphate = RNA(n) + a ribonucleoside 5'-diphosphate. Functionally, involved in the 3'-end maturation of mitochondrial mRNAs, rRNAs and tRNAs. Functions as a poly(A) mRNA 3'-5' degrading phosphorylase. This is Polyribonucleotide nucleotidyltransferase 2, mitochondrial (PNP2) from Oryza sativa subsp. japonica (Rice).